A 436-amino-acid polypeptide reads, in one-letter code: Ribosomal protein uS12 methylthiotransferase RimO (436 aa).

Positions 2-114 (PNLYLVSLGC…IDEMILKKQN (113 aa)) constitute an MTTase N-terminal domain. The [4Fe-4S] cluster site is built by Cys-11, Cys-45, Cys-77, Cys-146, Cys-150, and Cys-153. One can recognise a Radical SAM core domain in the interval 132–363 (TGSSYHAYIK…IKKQIEGSFK (232 aa)). The 72-residue stretch at 363–434 (KSLVGEVIKV…KDKLIGEIIC (72 aa)) folds into the TRAM domain.

The protein belongs to the methylthiotransferase family. RimO subfamily. [4Fe-4S] cluster is required as a cofactor.

The protein localises to the cytoplasm. The enzyme catalyses L-aspartate(89)-[ribosomal protein uS12]-hydrogen + (sulfur carrier)-SH + AH2 + 2 S-adenosyl-L-methionine = 3-methylsulfanyl-L-aspartate(89)-[ribosomal protein uS12]-hydrogen + (sulfur carrier)-H + 5'-deoxyadenosine + L-methionine + A + S-adenosyl-L-homocysteine + 2 H(+). Functionally, catalyzes the methylthiolation of an aspartic acid residue of ribosomal protein uS12. This is Ribosomal protein uS12 methylthiotransferase RimO from Campylobacter fetus subsp. fetus (strain 82-40).